We begin with the raw amino-acid sequence, 343 residues long: Methylthioribose-1-phosphate isomerase (343 aa).

Residues R48–A50, R88, and Q193 each bind substrate. D234 acts as the Proton donor in catalysis. N244–K245 lines the substrate pocket.

The protein belongs to the eIF-2B alpha/beta/delta subunits family. MtnA subfamily.

It catalyses the reaction 5-(methylsulfanyl)-alpha-D-ribose 1-phosphate = 5-(methylsulfanyl)-D-ribulose 1-phosphate. Its pathway is amino-acid biosynthesis; L-methionine biosynthesis via salvage pathway; L-methionine from S-methyl-5-thio-alpha-D-ribose 1-phosphate: step 1/6. Catalyzes the interconversion of methylthioribose-1-phosphate (MTR-1-P) into methylthioribulose-1-phosphate (MTRu-1-P). This Thermotoga maritima (strain ATCC 43589 / DSM 3109 / JCM 10099 / NBRC 100826 / MSB8) protein is Methylthioribose-1-phosphate isomerase.